The chain runs to 404 residues: Cysteine desulfurase IscS (404 aa).

Pyridoxal 5'-phosphate-binding positions include 75 to 76, asparagine 155, glutamine 183, and 203 to 205; these read AT and SSH. Lysine 206 is modified (N6-(pyridoxal phosphate)lysine). Threonine 243 is a pyridoxal 5'-phosphate binding site. The active-site Cysteine persulfide intermediate is cysteine 328. Cysteine 328 provides a ligand contact to [2Fe-2S] cluster.

Belongs to the class-V pyridoxal-phosphate-dependent aminotransferase family. NifS/IscS subfamily. Homodimer. Forms a heterotetramer with IscU, interacts with other sulfur acceptors. Requires pyridoxal 5'-phosphate as cofactor.

Its subcellular location is the cytoplasm. The catalysed reaction is (sulfur carrier)-H + L-cysteine = (sulfur carrier)-SH + L-alanine. It functions in the pathway cofactor biosynthesis; iron-sulfur cluster biosynthesis. Master enzyme that delivers sulfur to a number of partners involved in Fe-S cluster assembly, tRNA modification or cofactor biosynthesis. Catalyzes the removal of elemental sulfur atoms from cysteine to produce alanine. Functions as a sulfur delivery protein for Fe-S cluster synthesis onto IscU, an Fe-S scaffold assembly protein, as well as other S acceptor proteins. This Histophilus somni (strain 129Pt) (Haemophilus somnus) protein is Cysteine desulfurase IscS.